Reading from the N-terminus, the 224-residue chain is A-type ATP synthase subunit D (224 aa).

Residues 200–209 (KKVKDKKEAQ) show a composition bias toward basic and acidic residues. Positions 200-224 (KKVKDKKEAQEEAADEAAAAESTGA) are disordered. Residues 215 to 224 (EAAAAESTGA) show a composition bias toward low complexity.

It belongs to the V-ATPase D subunit family. In terms of assembly, has multiple subunits with at least A(3), B(3), C, D, E, F, H, I and proteolipid K(x).

Its subcellular location is the cell membrane. Component of the A-type ATP synthase that produces ATP from ADP in the presence of a proton gradient across the membrane. This chain is A-type ATP synthase subunit D, found in Halobacterium salinarum (strain ATCC 29341 / DSM 671 / R1).